The primary structure comprises 198 residues: ATP-dependent Clp protease proteolytic subunit (198 aa).

The active-site Nucleophile is the Ser-101. The active site involves His-126.

This sequence belongs to the peptidase S14 family. In terms of assembly, component of the chloroplastic Clp protease core complex.

The protein resides in the plastid. It is found in the chloroplast stroma. The catalysed reaction is Hydrolysis of proteins to small peptides in the presence of ATP and magnesium. alpha-casein is the usual test substrate. In the absence of ATP, only oligopeptides shorter than five residues are hydrolyzed (such as succinyl-Leu-Tyr-|-NHMec, and Leu-Tyr-Leu-|-Tyr-Trp, in which cleavage of the -Tyr-|-Leu- and -Tyr-|-Trp bonds also occurs).. In terms of biological role, cleaves peptides in various proteins in a process that requires ATP hydrolysis. Has a chymotrypsin-like activity. Plays a major role in the degradation of misfolded proteins. In Psilotum nudum (Whisk fern), this protein is ATP-dependent Clp protease proteolytic subunit.